The following is a 328-amino-acid chain: Phosphate acyltransferase (328 aa).

This sequence belongs to the PlsX family. As to quaternary structure, homodimer. Probably interacts with PlsY.

Its subcellular location is the cytoplasm. The enzyme catalyses a fatty acyl-[ACP] + phosphate = an acyl phosphate + holo-[ACP]. It functions in the pathway lipid metabolism; phospholipid metabolism. Functionally, catalyzes the reversible formation of acyl-phosphate (acyl-PO(4)) from acyl-[acyl-carrier-protein] (acyl-ACP). This enzyme utilizes acyl-ACP as fatty acyl donor, but not acyl-CoA. The chain is Phosphate acyltransferase from Staphylococcus haemolyticus (strain JCSC1435).